Consider the following 178-residue polypeptide: HTH-type transcriptional regulator SutR (178 aa).

One can recognise an HTH cro/C1-type domain in the interval 12-66 (LKQLRQQRGWSLSRLAEATGVSKAMLGQIERNESSPTVATLWKIATGLNVPFSTF). Positions 23–42 (LSRLAEATGVSKAMLGQIER) form a DNA-binding region, H-T-H motif. Positions 105 to 171 (QMASGAISES…GGEQTVHFHS (67 aa)) constitute a Cupin type-2 domain.

In terms of biological role, regulates the expression of 12-16 transcription units involved in various steps of sulfur utilization. Represses expression of pfkB, fliZ, cysE, ydcO and its own expression. Activates expression of ypfN. Acts by binding to SutR boxes. In Escherichia coli (strain K12), this protein is HTH-type transcriptional regulator SutR.